Reading from the N-terminus, the 732-residue chain is 1,4-alpha-glucan branching enzyme GlgB (732 aa).

Asp-409 functions as the Nucleophile in the catalytic mechanism. Glu-462 serves as the catalytic Proton donor.

Belongs to the glycosyl hydrolase 13 family. GlgB subfamily. As to quaternary structure, monomer.

The enzyme catalyses Transfers a segment of a (1-&gt;4)-alpha-D-glucan chain to a primary hydroxy group in a similar glucan chain.. Its pathway is glycan biosynthesis; glycogen biosynthesis. Its function is as follows. Catalyzes the formation of the alpha-1,6-glucosidic linkages in glycogen by scission of a 1,4-alpha-linked oligosaccharide from growing alpha-1,4-glucan chains and the subsequent attachment of the oligosaccharide to the alpha-1,6 position. In Corynebacterium diphtheriae (strain ATCC 700971 / NCTC 13129 / Biotype gravis), this protein is 1,4-alpha-glucan branching enzyme GlgB.